The primary structure comprises 633 residues: Cyclic GMP-AMP synthase-like receptor 1 (633 aa).

Disordered regions lie at residues 23 to 80 (KVHG…HPHT), 107 to 214 (FKGP…TDPF), and 250 to 276 (REDD…RPSS). The segment covering 29–67 (KQHESAHPPRERHTERTATKRSDETKTASRPTASHEGKT) has biased composition (basic and acidic residues). Positions 68 to 80 (HTTNPRGQVHPHT) are enriched in polar residues. Basic and acidic residues-rich tracts occupy residues 125-143 (RKPE…DHRT), 176-194 (RKPD…DHRT), and 250-274 (REDD…DDRP). The Mg(2+) site is built by Glu353, Asp355, and Asp455.

It belongs to the mab-21 family. Mg(2+) is required as a cofactor. The cofactor is Mn(2+).

It carries out the reaction UTP + ATP = 2',3'-cUAMP + 2 diphosphate. Functionally, nucleotidyltransferase that catalyzes the formation of cyclic UMP-AMP (2',3'-cUAMP) from ATP and UTP and plays a key role in innate immunity. Acts as a key sensor of double-stranded DNA (dsDNA), the presence of dsDNA in the cytoplasm being a danger signal that triggers the immune responses. Directly binds dsDNA, activating the nucleotidyltransferase activity, leading to synthesis of 2',3'-cUAMP, a second messenger that binds to and activates Sting, thereby triggering the immune response via activation of the NF-kappa-B transcription factor. The polypeptide is Cyclic GMP-AMP synthase-like receptor 1 (Crassostrea virginica (Eastern oyster)).